The following is a 226-amino-acid chain: tRNA (guanine-N(7)-)-methyltransferase (226 aa).

S-adenosyl-L-methionine-binding residues include Glu59, Glu84, Asp111, and Asp134. Residue Asp134 is part of the active site. Lys138 contacts substrate. Positions 140–145 (RHNKRR) are interaction with RNA. Substrate contacts are provided by residues Asp170 and 205–208 (TKFE).

The protein belongs to the class I-like SAM-binding methyltransferase superfamily. TrmB family.

The enzyme catalyses guanosine(46) in tRNA + S-adenosyl-L-methionine = N(7)-methylguanosine(46) in tRNA + S-adenosyl-L-homocysteine. Its pathway is tRNA modification; N(7)-methylguanine-tRNA biosynthesis. Its function is as follows. Catalyzes the formation of N(7)-methylguanine at position 46 (m7G46) in tRNA. The polypeptide is tRNA (guanine-N(7)-)-methyltransferase (Chromobacterium violaceum (strain ATCC 12472 / DSM 30191 / JCM 1249 / CCUG 213 / NBRC 12614 / NCIMB 9131 / NCTC 9757 / MK)).